Here is a 565-residue protein sequence, read N- to C-terminus: MKSPAPSRPQKMALIPACIFLYFAALSVQAEETPVTPQPPDILLGPLFNDVQNAKLFPDQKTFADAVPNSDPLMILADYRMQQNQSGFDLRHFVNVNFTLPKEGEKYVPPEGQSLREHIDGLWPVLTRSTENTEKWDSLLPLPEPYVVPGGRFREVYYWDSYFTMLGLAESGHWDKVADMVANFAHEINTYGHIPNGNRSYYLSRSQPPFFALMVELLAQHEGDAALKQYLPQMQKEYAYWMDGVENLQAGQQEKRVVKLQDGTLLNRYWDDRDTPRPESWVEDIATAKSNPNRPATEIYRDLRSAAASGWDFSSRWMDNPQQLNTLRTTSIVPVDLNSLMFKMEKILARASKAAGDNAMANQYETLANARQKGIEKYLWNDQQGWYADYDLKSHKVRNQLTAAALFPLYVNAAAKDRANKMATATKTHLLQPGGLNTTSVKSGQQWDAPNGWAPLQWVATEGLQNYGQKEVAMDISWHFLTNVQHTYDREKKLVEKYDVSTTGTGGGGGEYPLQDGFGWTNGVTLKMLDLICPKEQPCDNVPATHPTVKSATTQPSTKEAQPTP.

The first 30 residues, 1-30 (MKSPAPSRPQKMALIPACIFLYFAALSVQA), serve as a signal peptide directing secretion. Substrate-binding positions include Arg-152, 159 to 160 (WD), Asn-196, 205 to 207 (RSQ), 277 to 279 (RPE), and Gly-310. Active-site proton donor/acceptor residues include Asp-312 and Glu-496. Glu-511 serves as a coordination point for substrate. The segment at 540–565 (DNVPATHPTVKSATTQPSTKEAQPTP) is disordered. The span at 548–565 (TVKSATTQPSTKEAQPTP) shows a compositional bias: polar residues.

It belongs to the glycosyl hydrolase 37 family. Monomer.

Its subcellular location is the periplasm. The enzyme catalyses alpha,alpha-trehalose + H2O = alpha-D-glucose + beta-D-glucose. Functionally, provides the cells with the ability to utilize trehalose at high osmolarity by splitting it into glucose molecules that can subsequently be taken up by the phosphotransferase-mediated uptake system. The protein is Periplasmic trehalase of Shigella flexneri serotype 5b (strain 8401).